We begin with the raw amino-acid sequence, 282 residues long: 3-methyl-2-oxobutanoate hydroxymethyltransferase (282 aa).

2 residues coordinate Mg(2+): D46 and D85. 3-methyl-2-oxobutanoate contacts are provided by residues 46–47 (DS), D85, and K115. Position 117 (E117) interacts with Mg(2+). The active-site Proton acceptor is E184.

Belongs to the PanB family. Homodecamer; pentamer of dimers. Mg(2+) is required as a cofactor.

The protein resides in the cytoplasm. The enzyme catalyses 3-methyl-2-oxobutanoate + (6R)-5,10-methylene-5,6,7,8-tetrahydrofolate + H2O = 2-dehydropantoate + (6S)-5,6,7,8-tetrahydrofolate. Its pathway is cofactor biosynthesis; (R)-pantothenate biosynthesis; (R)-pantoate from 3-methyl-2-oxobutanoate: step 1/2. In terms of biological role, catalyzes the reversible reaction in which hydroxymethyl group from 5,10-methylenetetrahydrofolate is transferred onto alpha-ketoisovalerate to form ketopantoate. The protein is 3-methyl-2-oxobutanoate hydroxymethyltransferase of Alkaliphilus metalliredigens (strain QYMF).